A 541-amino-acid chain; its full sequence is CTP synthase (541 aa).

Positions 1 to 271 are amidoligase domain; the sequence is MVGKLNPTRF…DTQILKHFDV (271 aa). Ser19 serves as a coordination point for CTP. A UTP-binding site is contributed by Ser19. ATP is bound by residues 20–25 and Asp77; that span reads SLGKGL. Mg(2+) contacts are provided by Asp77 and Glu145. CTP contacts are provided by residues 152 to 154, 192 to 197, and Lys228; these read DIE and KTKPTQ. UTP-binding positions include 192–197 and Lys228; that span reads KTKPTQ. Residues 296-537 form the Glutamine amidotransferase type-1 domain; that stretch reads VIAIVGKYVT…VTSTLQVKKA (242 aa). L-glutamine is bound at residue Gly355. Residue Cys382 is the Nucleophile; for glutamine hydrolysis of the active site. L-glutamine is bound by residues 383-386, Glu406, and Arg465; that span reads LGMQ. Catalysis depends on residues His510 and Glu512.

Belongs to the CTP synthase family. In terms of assembly, homotetramer.

The catalysed reaction is UTP + L-glutamine + ATP + H2O = CTP + L-glutamate + ADP + phosphate + 2 H(+). It carries out the reaction L-glutamine + H2O = L-glutamate + NH4(+). The enzyme catalyses UTP + NH4(+) + ATP = CTP + ADP + phosphate + 2 H(+). It functions in the pathway pyrimidine metabolism; CTP biosynthesis via de novo pathway; CTP from UDP: step 2/2. Its activity is regulated as follows. Allosterically activated by GTP, when glutamine is the substrate; GTP has no effect on the reaction when ammonia is the substrate. The allosteric effector GTP functions by stabilizing the protein conformation that binds the tetrahedral intermediate(s) formed during glutamine hydrolysis. Inhibited by the product CTP, via allosteric rather than competitive inhibition. In terms of biological role, catalyzes the ATP-dependent amination of UTP to CTP with either L-glutamine or ammonia as the source of nitrogen. Regulates intracellular CTP levels through interactions with the four ribonucleotide triphosphates. The protein is CTP synthase of Anaplasma phagocytophilum (strain HZ).